A 312-amino-acid chain; its full sequence is Gamma-soluble NSF attachment protein (312 aa).

The disordered stretch occupies residues lysine 281–cysteine 312. Serine 284 carries the phosphoserine modification. Position 287 is a phosphothreonine (threonine 287). Residues alanine 300–cysteine 312 are compositionally biased toward acidic residues. Phosphoserine is present on serine 308.

Belongs to the SNAP family. Interacts with RAB11FIP5. Interacts with VTI1A. In terms of tissue distribution, abundantly expressed in the heart, liver and kidneys with lower expression in the brain, spleen, lung, muscle and testes.

The protein resides in the membrane. It is found in the golgi apparatus. Required for vesicular transport between the endoplasmic reticulum and the Golgi apparatus. This Mus musculus (Mouse) protein is Gamma-soluble NSF attachment protein.